Here is a 249-residue protein sequence, read N- to C-terminus: ATP-dependent dethiobiotin synthetase BioD (249 aa).

Residue 11 to 16 (NVGKTI) coordinates ATP. Thr-15 contributes to the Mg(2+) binding site. Lys-31 is an active-site residue. Position 35 (Thr-35) interacts with substrate. ATP contacts are provided by residues Asp-40, 127–130 (EGAG), 188–189 (NS), and 215–217 (PYL). The Mg(2+) site is built by Asp-40 and Glu-127.

Belongs to the dethiobiotin synthetase family. In terms of assembly, homodimer. It depends on Mg(2+) as a cofactor.

Its subcellular location is the cytoplasm. The enzyme catalyses (7R,8S)-7,8-diammoniononanoate + CO2 + ATP = (4R,5S)-dethiobiotin + ADP + phosphate + 3 H(+). Its pathway is cofactor biosynthesis; biotin biosynthesis; biotin from 7,8-diaminononanoate: step 1/2. Catalyzes a mechanistically unusual reaction, the ATP-dependent insertion of CO2 between the N7 and N8 nitrogen atoms of 7,8-diaminopelargonic acid (DAPA, also called 7,8-diammoniononanoate) to form a ureido ring. The protein is ATP-dependent dethiobiotin synthetase BioD of Neorickettsia sennetsu (strain ATCC VR-367 / Miyayama) (Ehrlichia sennetsu).